Here is a 620-residue protein sequence, read N- to C-terminus: 1-deoxy-D-xylulose-5-phosphate synthase (620 aa).

Residues His-80 and 121–123 (GHS) contribute to the thiamine diphosphate site. Residue Asp-152 participates in Mg(2+) binding. Thiamine diphosphate-binding positions include 153–154 (GA), Asn-181, Tyr-288, and Glu-370. Residue Asn-181 participates in Mg(2+) binding.

This sequence belongs to the transketolase family. DXPS subfamily. In terms of assembly, homodimer. Requires Mg(2+) as cofactor. Thiamine diphosphate is required as a cofactor.

It catalyses the reaction D-glyceraldehyde 3-phosphate + pyruvate + H(+) = 1-deoxy-D-xylulose 5-phosphate + CO2. It participates in metabolic intermediate biosynthesis; 1-deoxy-D-xylulose 5-phosphate biosynthesis; 1-deoxy-D-xylulose 5-phosphate from D-glyceraldehyde 3-phosphate and pyruvate: step 1/1. Functionally, catalyzes the acyloin condensation reaction between C atoms 2 and 3 of pyruvate and glyceraldehyde 3-phosphate to yield 1-deoxy-D-xylulose-5-phosphate (DXP). In Cronobacter sakazakii (strain ATCC BAA-894) (Enterobacter sakazakii), this protein is 1-deoxy-D-xylulose-5-phosphate synthase.